The sequence spans 122 residues: Large ribosomal subunit protein uL14 (122 aa).

Belongs to the universal ribosomal protein uL14 family. Part of the 50S ribosomal subunit. Forms a cluster with proteins L3 and L19. In the 70S ribosome, L14 and L19 interact and together make contacts with the 16S rRNA in bridges B5 and B8.

Functionally, binds to 23S rRNA. Forms part of two intersubunit bridges in the 70S ribosome. The sequence is that of Large ribosomal subunit protein uL14 from Campylobacter hominis (strain ATCC BAA-381 / DSM 21671 / CCUG 45161 / LMG 19568 / NCTC 13146 / CH001A).